A 292-amino-acid polypeptide reads, in one-letter code: Aspartate carbamoyltransferase catalytic subunit (292 aa).

2 residues coordinate carbamoyl phosphate: arginine 50 and threonine 51. L-aspartate is bound at residue lysine 78. Carbamoyl phosphate is bound by residues arginine 100, histidine 128, and glutamine 131. Positions 161 and 211 each coordinate L-aspartate. Carbamoyl phosphate is bound by residues glycine 250 and proline 251.

The protein belongs to the aspartate/ornithine carbamoyltransferase superfamily. ATCase family. Heterododecamer (2C3:3R2) of six catalytic PyrB chains organized as two trimers (C3), and six regulatory PyrI chains organized as three dimers (R2).

The enzyme catalyses carbamoyl phosphate + L-aspartate = N-carbamoyl-L-aspartate + phosphate + H(+). The protein operates within pyrimidine metabolism; UMP biosynthesis via de novo pathway; (S)-dihydroorotate from bicarbonate: step 2/3. Its function is as follows. Catalyzes the condensation of carbamoyl phosphate and aspartate to form carbamoyl aspartate and inorganic phosphate, the committed step in the de novo pyrimidine nucleotide biosynthesis pathway. This Nitratiruptor sp. (strain SB155-2) protein is Aspartate carbamoyltransferase catalytic subunit.